Reading from the N-terminus, the 693-residue chain is Tegument protein UL47 (693 aa).

Disordered stretches follow at residues 1–32 (MSAR…DGVG) and 48–126 (ELEA…GYLG). Acidic residues predominate over residues 48-57 (ELEALEEMAG). The RNA-binding stretch occupies residues 50 to 75 (EALEEMAGDEPPVRRRREGPRARRRR). Residues 63 to 75 (RRRREGPRARRRR) carry the Nuclear localization signal motif. A compositionally biased stretch (basic residues) spans 63–75 (RRRREGPRARRRR). A Nuclear export signal motif is present at residues 647 to 670 (SVLGPGVRVVDIMSQFRKLLMGDE).

Belongs to the alphaherpesvirinae HHV-1 UL47 family. As to quaternary structure, interacts with US3 kinase. Interacts with UL31 and UL34; these interactions seem important for efficient virion nuclear egress. Interacts with UL41/VHS. In terms of processing, phosphorylated by US3. This phosphorylation is required for proper nuclear localization.

It is found in the virion tegument. It localises to the host nucleus. The protein resides in the host cytoplasm. Its function is as follows. Tegument protein that can bind to various RNA transcripts. Plays a role in the attenuation of selective viral and cellular mRNA degradation by modulating the activity of host shutoff RNase UL41/VHS. Also plays a role in the primary envelopment of virions in the perinuclear space, probably by interacting with two nuclear egress proteins UL31 and UL34. In Human herpesvirus 1 (strain F) (HHV-1), this protein is Tegument protein UL47.